The primary structure comprises 279 residues: Phosphatidylglycerol--prolipoprotein diacylglyceryl transferase (279 aa).

3 helical membrane-spanning segments follow: residues 18-38 (LSVRWYGIIIAVGILLGYFVA), 55-75 (IIFYSALFGFIAARIYFVIFQ), and 89-109 (IWHGGIAIHGGLIGGFIAGVI). Arginine 137 is an a 1,2-diacyl-sn-glycero-3-phospho-(1'-sn-glycerol) binding site. Helical transmembrane passes span 203 to 223 (LGETFFLYLTWYSIGRFFIEG) and 235 to 255 (IRVAQLVSILLILISISLIVY).

The protein belongs to the Lgt family.

It is found in the cell membrane. The enzyme catalyses L-cysteinyl-[prolipoprotein] + a 1,2-diacyl-sn-glycero-3-phospho-(1'-sn-glycerol) = an S-1,2-diacyl-sn-glyceryl-L-cysteinyl-[prolipoprotein] + sn-glycerol 1-phosphate + H(+). Its pathway is protein modification; lipoprotein biosynthesis (diacylglyceryl transfer). Its function is as follows. Catalyzes the transfer of the diacylglyceryl group from phosphatidylglycerol to the sulfhydryl group of the N-terminal cysteine of a prolipoprotein, the first step in the formation of mature lipoproteins. In Staphylococcus aureus (strain MSSA476), this protein is Phosphatidylglycerol--prolipoprotein diacylglyceryl transferase.